We begin with the raw amino-acid sequence, 333 residues long: 3-isopropylmalate/3-methylmalate dehydrogenase (333 aa).

Substrate is bound by residues Arg-81, Arg-91, Arg-112, and Asp-203. Mg(2+) contacts are provided by Asp-203, Asp-227, and Asp-231. An NAD(+)-binding site is contributed by 260-272 (GSAPDIAGKKIAN).

This sequence belongs to the isocitrate and isopropylmalate dehydrogenases family. In terms of assembly, homotetramer. Requires Mg(2+) as cofactor. It depends on Mn(2+) as a cofactor.

The protein localises to the cytoplasm. It catalyses the reaction (2R,3S)-3-isopropylmalate + NAD(+) = 4-methyl-2-oxopentanoate + CO2 + NADH. The enzyme catalyses (2R,3S)-3-methylmalate + NAD(+) = 2-oxobutanoate + CO2 + NADH. It carries out the reaction (R)-malate + NAD(+) = pyruvate + CO2 + NADH. It functions in the pathway amino-acid biosynthesis; L-leucine biosynthesis; L-leucine from 3-methyl-2-oxobutanoate: step 3/4. The protein operates within amino-acid biosynthesis; L-isoleucine biosynthesis; 2-oxobutanoate from pyruvate: step 3/3. Functionally, catalyzes the oxidation of 3-carboxy-2-hydroxy-4-methylpentanoate (3-isopropylmalate) to 3-carboxy-4-methyl-2-oxopentanoate, which decarboxylates to 4-methyl-2-oxopentanoate (2-oxoisocaproate). Also catalyzes the oxidative decarboxylation of 3-methylmalate to 2-oxobutyrate, and that of D-malate to pyruvate. Cannot use NADP(+) instead of NAD(+). Cannot catalyze the oxidation of L-malate, L-tartrate, D-tartrate, DL-isocitrate, or DL-lactate. The chain is 3-isopropylmalate/3-methylmalate dehydrogenase (leuB) from Methanocaldococcus jannaschii (strain ATCC 43067 / DSM 2661 / JAL-1 / JCM 10045 / NBRC 100440) (Methanococcus jannaschii).